A 311-amino-acid chain; its full sequence is Pyrimidine-specific ribonucleoside hydrolase RihA (311 aa).

Residue H240 is part of the active site.

This sequence belongs to the IUNH family. RihA subfamily.

Hydrolyzes cytidine or uridine to ribose and cytosine or uracil, respectively. This is Pyrimidine-specific ribonucleoside hydrolase RihA from Salmonella paratyphi A (strain ATCC 9150 / SARB42).